The chain runs to 1129 residues: MCSPDPEDMHILTNDIPSFDKSLDPYGPEGHLALDIERFSSFMNKPDSRIMSKPVIVRGIPWRILAICRHQQNNRQVATSRSRNNYNFGFFLQCNNDDLLQKRGMWRCYGQATLEVLNANGPPIQKKIHHSFHNTEVDWGFSNYDQYDTLTSPKDGYVIDDVIRLRCRFTADVPTGANYMWDSKKHTGCIGLRNQGATCYMNSILQSFYFTTGFRRAVYNMEVGTEPNESNIVLAMQRVFYELQMSSEAVETNSLTRAFGWDKLDAFNQHDVQEFCRVLLDNLETKMKGTSEEKSIPNLFRGNMKSYIKCLDVDYESSRTESFYDVQLNVLGMDSLERAFDAYTTPETLDDDNKYDAGDHGLQRAEKGVKFVELPPVLHVQLMRFQYCGVEQKINERFSFPEKMNLSNCCELGPMLNEEDCVYSLHAVLVHSGEFHGGHYVTYINVNLHESAVDPTATAKWCKFDDDVVSRTTTDDAIVSNFGGEKAMNSSAYMLVYVRDNAIDQVLAPIPDTQIPQSVSRTFEMERMHRNREKKKQEEEQMCMSITLVTPDILATNHSFDLIEPVTITDVLPHETVYKHMVTAELYQFVQEKLFEKSTLPKVDMFDSDDETRMKRKEILRRLKTKKFGFRLWRMTDSYTVDKPQKMASRLRPSDFIEYSIDTRLDHTLSHDTETIYVEHSQFLQPLNEYLPTRDILFFLKYYDAITDKFTIIGHVTLDSHKRLNLYRMTFCDLLGLPKDTELKYYIEHAPNHVEQIDDPNRSTISRLVDDQDGAIVIVEKADPTAKKDAKTKMIELYNDVEFEFSQQFYSKMPNEEPFELFTKRFCLEQKLTDVTEFIGSELNVDPRNVMLWTRVSGSRFEPNFDDYAVTGIQCKYLTLRTLHDPRQHKKYSVSYAIFPFPVNEVHTTRMFVRLYRQMPNGNVEELNLFPPKDGTVTDLIAEAKRYYPSVEGGSGKFRLLQIGTSPLNNQRVFQIYNENTAIVDLDQRPVYKQQAQHTLNCRIEEIPHDELDVAQGEFFCPVVHYDREPTKLFGVSFVIKIRNGELMTDVRDRLRRKLPDVSDAEFAKYKFALLSRDKLCRNIEFNAGEKVNLMDMANQTTGVPQVYIGLDHKSPSQHSNEAAIRILN.

In terms of domain architecture, MATH spans 29 to 169 (EGHLALDIER…DDVIRLRCRF (141 aa)). The USP domain occupies 190–500 (IGLRNQGATC…SAYMLVYVRD (311 aa)). Cysteine 199 functions as the Nucleophile in the catalytic mechanism. The active-site Proton acceptor is histidine 439.

This sequence belongs to the peptidase C19 family.

The protein localises to the nucleus. It carries out the reaction Thiol-dependent hydrolysis of ester, thioester, amide, peptide and isopeptide bonds formed by the C-terminal Gly of ubiquitin (a 76-residue protein attached to proteins as an intracellular targeting signal).. Hydrolase that deubiquitinates target proteins. The sequence is that of Ubiquitin carboxyl-terminal hydrolase 7 from Caenorhabditis briggsae.